The primary structure comprises 307 residues: Urease accessory protein UreD (307 aa).

Belongs to the UreD family. As to quaternary structure, ureD, UreF and UreG form a complex that acts as a GTP-hydrolysis-dependent molecular chaperone, activating the urease apoprotein by helping to assemble the nickel containing metallocenter of UreC. The UreE protein probably delivers the nickel.

The protein resides in the cytoplasm. Its function is as follows. Required for maturation of urease via the functional incorporation of the urease nickel metallocenter. The chain is Urease accessory protein UreD from Prochlorococcus marinus (strain NATL2A).